Consider the following 58-residue polypeptide: Potassium channel toxin alpha-KTx 26.2 (58 aa).

A signal peptide spans 1 to 19 (MKTIFVVILVLFVLSAMLA). Disulfide bonds link Cys31–Cys49, Cys35–Cys54, and Cys39–Cys56.

The protein belongs to the short scorpion toxin superfamily. Potassium channel inhibitor family. Alpha-KTx 26 subfamily. Expressed by the venom gland.

It is found in the secreted. Its function is as follows. Inhibits voltage-gated potassium channels. This Lychas mucronatus (Chinese swimming scorpion) protein is Potassium channel toxin alpha-KTx 26.2.